Here is a 331-residue protein sequence, read N- to C-terminus: Protein RecA (331 aa).

ATP is bound at residue 66 to 73 (GPESSGKT).

Belongs to the RecA family.

It localises to the cytoplasm. Functionally, can catalyze the hydrolysis of ATP in the presence of single-stranded DNA, the ATP-dependent uptake of single-stranded DNA by duplex DNA, and the ATP-dependent hybridization of homologous single-stranded DNAs. It interacts with LexA causing its activation and leading to its autocatalytic cleavage. The polypeptide is Protein RecA (Lactobacillus delbrueckii subsp. bulgaricus (strain ATCC 11842 / DSM 20081 / BCRC 10696 / JCM 1002 / NBRC 13953 / NCIMB 11778 / NCTC 12712 / WDCM 00102 / Lb 14)).